The primary structure comprises 516 residues: Leucine-rich repeat transmembrane neuronal protein 2 (516 aa).

An N-terminal signal peptide occupies residues 1 to 33 (MGLHFKWPLGAPMLAAIYAMSMVLKMLPALGMA). An LRRNT domain is found at 34–61 (CPPKCRCEKLLFYCDSQGFHSVPNATDK). Residues 34-422 (CPPKCRCEKL…EPDNAIFTQR (389 aa)) are Extracellular-facing. N57 carries N-linked (GlcNAc...) asparagine glycosylation. LRR repeat units follow at residues 63–83 (SLGL…QFAS), 86–107 (QLTW…AFQG), 110–131 (KLKE…TFTQ), 134–155 (NLQN…LFYG), 158–179 (KLQT…LFWD), 182–203 (SLEF…GFAG), 206–227 (KLRE…HFLR), 230–251 (SLHT…MEWT), 254–275 (TLEK…VFET), and 278–299 (NLKI…ILNS). N126 is a glycosylation site (N-linked (GlcNAc...) asparagine). N243 is a glycosylation site (N-linked (GlcNAc...) asparagine). The region spanning 311–362 (NLWECSARICALASWLGSFQGRWEHSILCHSPDHTQGEDILDAVHGFQLCWN) is the LRRCT domain. N362 is a glycosylation site (N-linked (GlcNAc...) asparagine). The chain crosses the membrane as a helical span at residues 423–443 (VITGTMALLFSFFFIIFIVFI). Residues 444-516 (SRKCCPPTLR…QQLPYKECEV (73 aa)) are Cytoplasmic-facing. Positions 513–516 (ECEV) match the Involved in DLG4-binding motif.

Belongs to the LRRTM family. Interacts with DLG4. Interacts with neurexin NRXN1; interaction is mediated by heparan sulfate glycan modification on neurexin. As to expression, expressed in neuronal tissues.

The protein resides in the cell membrane. It is found in the postsynaptic cell membrane. Functionally, involved in the development and maintenance of excitatory synapses in the vertebrate nervous system. Regulates surface expression of AMPA receptors and instructs the development of functional glutamate release sites. Acts as a ligand for the presynaptic receptors NRXN1-A and NRXN1-B. The protein is Leucine-rich repeat transmembrane neuronal protein 2 (LRRTM2) of Homo sapiens (Human).